A 289-amino-acid polypeptide reads, in one-letter code: Porin (289 aa).

In terms of assembly, homotrimer.

Its subcellular location is the cell outer membrane. Its function is as follows. Forms channels that allow the passive diffusion of small hydrophilic solutes up to an exclusion limit of about 0.6 kDa. The sequence is that of Porin (opmA) from Fuscovulum blasticum (Rhodobacter blasticus).